The chain runs to 883 residues: Alanine--tRNA ligase (883 aa).

Zn(2+)-binding residues include His-562, His-566, Cys-664, and His-668.

The protein belongs to the class-II aminoacyl-tRNA synthetase family. As to quaternary structure, homotetramer. Requires Zn(2+) as cofactor.

It is found in the cytoplasm. The enzyme catalyses tRNA(Ala) + L-alanine + ATP = L-alanyl-tRNA(Ala) + AMP + diphosphate. Catalyzes the attachment of alanine to tRNA(Ala) in a two-step reaction: alanine is first activated by ATP to form Ala-AMP and then transferred to the acceptor end of tRNA(Ala). Also edits incorrectly charged Ser-tRNA(Ala) and Gly-tRNA(Ala) via its editing domain. This Buchnera aphidicola subsp. Schizaphis graminum (strain Sg) protein is Alanine--tRNA ligase.